The chain runs to 113 residues: Large ribosomal subunit protein bL19 (113 aa).

It belongs to the bacterial ribosomal protein bL19 family.

This protein is located at the 30S-50S ribosomal subunit interface and may play a role in the structure and function of the aminoacyl-tRNA binding site. In Mycolicibacterium smegmatis (strain ATCC 700084 / mc(2)155) (Mycobacterium smegmatis), this protein is Large ribosomal subunit protein bL19.